A 180-amino-acid chain; its full sequence is Large ribosomal subunit protein uL5 (180 aa).

This sequence belongs to the universal ribosomal protein uL5 family. Part of the 50S ribosomal subunit; part of the 5S rRNA/L5/L18/L25 subcomplex. Contacts the 5S rRNA and the P site tRNA. Forms a bridge to the 30S subunit in the 70S ribosome.

This is one of the proteins that bind and probably mediate the attachment of the 5S RNA into the large ribosomal subunit, where it forms part of the central protuberance. In the 70S ribosome it contacts protein S13 of the 30S subunit (bridge B1b), connecting the 2 subunits; this bridge is implicated in subunit movement. Contacts the P site tRNA; the 5S rRNA and some of its associated proteins might help stabilize positioning of ribosome-bound tRNAs. In Lactobacillus acidophilus (strain ATCC 700396 / NCK56 / N2 / NCFM), this protein is Large ribosomal subunit protein uL5.